Reading from the N-terminus, the 376-residue chain is Adipocyte plasma membrane-associated protein (376 aa).

The helical transmembrane segment at 1 to 17 threads the bilayer; it reads MTFLMLAVSLAIPLLGA. A glycan (N-linked (GlcNAc...) asparagine) is linked at Asn-120.

The protein belongs to the strictosidine synthase family.

It is found in the membrane. Its function is as follows. Exhibits strong arylesterase activity with beta-naphthyl acetate and phenyl acetate. May play a role in adipocyte differentiation. The chain is Adipocyte plasma membrane-associated protein (Apmap) from Rattus norvegicus (Rat).